Consider the following 885-residue polypeptide: Insulin receptor substrate 1-A (885 aa).

The 56-residue stretch at Met1–Phe56 folds into the IRS-type PTB domain. A disordered region spans residues Phe56 to Gly225. Low complexity-rich tracts occupy residues Lys61–Pro75, Ser99–Ala109, Ser176–Ser197, and Ser205–Gly217. Ser104 carries the phosphoserine modification. Tyr257 is modified (phosphotyrosine; by INSR). Positions Tyr257–Met260 match the YXXM motif 1 motif. Composition is skewed to polar residues over residues Ser263–Gln276 and Ser296–Ser313. Disordered stretches follow at residues Ser263–Glu282 and Arg293–Ser313. Short sequence motifs (YXXM motif) lie at residues Tyr318–Met321, Tyr364–Met367, Tyr381–Met384, Tyr409–Met412, and Tyr451–Met454. Phosphotyrosine; by INSR is present on residues Tyr364 and Tyr381. Tyr409 is modified (phosphotyrosine). Positions Asn501–Glu581 are disordered. Polar residues predominate over residues Ile504–Glu515. Positions Asp516–Ser526 are enriched in low complexity. 2 positions are modified to phosphotyrosine; by INSR: Tyr582 and Tyr620. The segment at Tyr582–Asn584 is GRB2-binding. The short motif at Tyr620–Met623 is the YXXM motif 7 element. Residues Thr637–Arg660 are compositionally biased toward polar residues. The interval Thr637–Gly665 is disordered. Residue Tyr672 is modified to Phosphotyrosine; by INSR. 2 consecutive short sequence motifs (YXXM motif) follow at residues Tyr672 to Met675 and Tyr706 to Met709. The disordered stretch occupies residues Ala732 to Ser803. 2 stretches are compositionally biased toward polar residues: residues Gly743–Pro758 and Glu777–Pro792. A phosphotyrosine; by INSR mark is found at Tyr834 and Tyr866.

Interacts with the NPXY motif of tyrosine-phosphorylated igf1r and insr via the PTB domain. Binds to phosphatidylinositol 3-kinase p85 subunit at a low level in vitro prior to phosphorylation. Binding is greatly enhanced following tyrosine phosphorylation by insr and probably occurs via the phosphorylated YXXM motifs. In terms of processing, phosphorylation of Tyr-582 is required for grb2-binding.

In terms of biological role, may mediate the control of various cellular processes by insulin. When phosphorylated by the insulin receptor binds specifically to various cellular proteins containing SH2 domains such as phosphatidylinositol 3-kinase p85 subunit or grb2. Activates phosphatidylinositol 3-kinase when bound to the regulatory p85 subunit. This chain is Insulin receptor substrate 1-A (irs1-a), found in Xenopus laevis (African clawed frog).